A 141-amino-acid polypeptide reads, in one-letter code: Putative nickel-responsive regulator (141 aa).

Residues H83, H94, H96, and C102 each coordinate Ni(2+).

Belongs to the transcriptional regulatory CopG/NikR family. Ni(2+) serves as cofactor.

Functionally, transcriptional regulator. The polypeptide is Putative nickel-responsive regulator (Methanopyrus kandleri (strain AV19 / DSM 6324 / JCM 9639 / NBRC 100938)).